Here is a 107-residue protein sequence, read N- to C-terminus: Pre-mRNA-splicing factor RDS3 (107 aa).

The protein belongs to the PHF5 family. As to quaternary structure, component of the spliceosome where it interacts with CUS1, HSH49, HSH155, IST3 and RSE1. Also interacts with YRA1.

It is found in the nucleus. In terms of biological role, required for pre-mRNA splicing. Involved in regulation of drug sensitivity and may play a role in multidrug resistance. This is Pre-mRNA-splicing factor RDS3 (RDS3) from Saccharomyces cerevisiae (strain ATCC 204508 / S288c) (Baker's yeast).